We begin with the raw amino-acid sequence, 313 residues long: Pyrimidine-specific ribonucleoside hydrolase RihB (313 aa).

Asp-11 (proton acceptor) is an active-site residue. 3 residues coordinate Ca(2+): Asp-11, Asp-16, and Val-124. Substrate-binding residues include Gln-227 and His-239. Asp-240 provides a ligand contact to Ca(2+).

The protein belongs to the IUNH family. RihB subfamily. As to quaternary structure, homotetramer. Ca(2+) serves as cofactor.

It catalyses the reaction a pyrimidine ribonucleoside + H2O = a pyrimidine nucleobase + D-ribose. In terms of biological role, hydrolyzes cytidine or uridine to ribose and cytosine or uracil, respectively. Has a clear preference for cytidine over uridine. Strictly specific for ribonucleosides. The chain is Pyrimidine-specific ribonucleoside hydrolase RihB from Escherichia coli (strain SMS-3-5 / SECEC).